The chain runs to 95 residues: Large ribosomal subunit protein uL23 (95 aa).

Belongs to the universal ribosomal protein uL23 family. In terms of assembly, part of the 50S ribosomal subunit. Contacts protein L29, and trigger factor when it is bound to the ribosome.

In terms of biological role, one of the early assembly proteins it binds 23S rRNA. One of the proteins that surrounds the polypeptide exit tunnel on the outside of the ribosome. Forms the main docking site for trigger factor binding to the ribosome. This Desulfotalea psychrophila (strain LSv54 / DSM 12343) protein is Large ribosomal subunit protein uL23.